A 117-amino-acid polypeptide reads, in one-letter code: Large-conductance mechanosensitive channel (117 aa).

Helical transmembrane passes span 7–27 (EFAL…GAAF), 30–50 (IVTS…FGSV), and 64–84 (GLFI…FIFV).

Belongs to the MscL family. Homopentamer.

It is found in the cell membrane. In terms of biological role, channel that opens in response to stretch forces in the membrane lipid bilayer. May participate in the regulation of osmotic pressure changes within the cell. This chain is Large-conductance mechanosensitive channel, found in Staphylococcus haemolyticus (strain JCSC1435).